A 211-amino-acid chain; its full sequence is High mobility group protein B1-like 1 (211 aa).

Lys-3, Lys-7, Lys-8, Lys-12, Lys-28, Lys-29, and Lys-30 each carry N6-acetyllysine. The segment at residues 9–79 is a DNA-binding region (HMG box 1); it reads PRGKMSSYAF…HYERQMKTYI (71 aa). The segment at 71-96 is disordered; sequence YERQMKTYIPPKGETKKKFKDPNAPK. The segment covering 83–94 has biased composition (basic and acidic residues); sequence GETKKKFKDPNA. Residues 95–163 constitute a DNA-binding region (HMG box 2); that stretch reads PKRPPSAFFL…KYEKDIAAYQ (69 aa). N6-acetyllysine is present on residues Lys-127, Lys-128, Lys-172, Lys-173, Lys-177, Lys-180, Lys-182, Lys-183, Lys-184, and Lys-185. Residues 161–211 are disordered; that stretch reads AYQAKGKPEAAKKGVVKAEKSKKKKEEEEDEEDEEDEEEEDEEDEEDDDDE. The segment covering 166–179 has biased composition (basic and acidic residues); sequence GKPEAAKKGVVKAE. The span at 187–211 shows a compositional bias: acidic residues; the sequence is EEEDEEDEEDEEEEDEEDEEDDDDE.

Belongs to the HMGB family.

It localises to the nucleus. The protein resides in the chromosome. Functionally, binds preferentially single-stranded DNA and unwinds double-stranded DNA. The protein is High mobility group protein B1-like 1 (HMGB1P1) of Homo sapiens (Human).